The primary structure comprises 514 residues: Leucine-rich repeat-containing protein 14B (514 aa).

Residues 104-141 form an LRR 1; degenerate repeat; sequence RRRLRVADLTGIRDVQVQRCPCGRALGRWGRTQLLART. The stretch at 185–209 is one LRR 2; degenerate repeat; that stretch reads RVHCPSFRADSLSPSQLLHVLRLAG. The stretch at 238-277 is one LRR 4; degenerate repeat; the sequence is FPRLASLTLPTKAFDAPPTYASTPDGEDPLLASIARELSK. LRR repeat units follow at residues 278–302, 303–334, 335–350, 359–386, and 387–411; these read MAQLTELSVAFSTLTGKIPTLLGPL, QTPLRVLDLANCALNHTDMAFLADCAHAAHLE, VLDLSGHNLVSLYPST, SRTLRILTLEECGIVDSHVGMLILGLSP, and CHRLRQLKFLGNPLSARALRRLFTA.

It belongs to the PRAME family. LRRC14 subfamily.

The protein is Leucine-rich repeat-containing protein 14B of Homo sapiens (Human).